We begin with the raw amino-acid sequence, 299 residues long: Protease HtpX homolog (299 aa).

The next 2 helical transmembrane spans lie at 19–39 and 41–61; these read LFIV…VWYF and WGIT…WIAY. Histidine 146 contributes to the Zn(2+) binding site. Glutamate 147 is a catalytic residue. Histidine 150 contributes to the Zn(2+) binding site. Helical transmembrane passes span 156–176 and 198–218; these read ILLM…RDVF and IILL…VLII. A Zn(2+)-binding site is contributed by glutamate 227.

It belongs to the peptidase M48B family. Requires Zn(2+) as cofactor.

Its subcellular location is the cell membrane. The sequence is that of Protease HtpX homolog from Caldanaerobacter subterraneus subsp. tengcongensis (strain DSM 15242 / JCM 11007 / NBRC 100824 / MB4) (Thermoanaerobacter tengcongensis).